Consider the following 465-residue polypeptide: ATP-dependent protease ATPase subunit HslU (465 aa).

Residues valine 19, 61–66 (GVGKTE), aspartate 277, glutamate 343, and arginine 415 each bind ATP.

The protein belongs to the ClpX chaperone family. HslU subfamily. A double ring-shaped homohexamer of HslV is capped on each side by a ring-shaped HslU homohexamer. The assembly of the HslU/HslV complex is dependent on binding of ATP.

The protein resides in the cytoplasm. ATPase subunit of a proteasome-like degradation complex; this subunit has chaperone activity. The binding of ATP and its subsequent hydrolysis by HslU are essential for unfolding of protein substrates subsequently hydrolyzed by HslV. HslU recognizes the N-terminal part of its protein substrates and unfolds these before they are guided to HslV for hydrolysis. The polypeptide is ATP-dependent protease ATPase subunit HslU (Geobacillus sp. (strain WCH70)).